The following is a 411-amino-acid chain: Serine hydroxymethyltransferase (411 aa).

(6S)-5,6,7,8-tetrahydrofolate-binding positions include Leu-113 and 117-119 (GHL). Lys-222 carries the N6-(pyridoxal phosphate)lysine modification. (6S)-5,6,7,8-tetrahydrofolate-binding positions include Glu-238 and 346 to 348 (SPF).

The protein belongs to the SHMT family. In terms of assembly, homodimer. Pyridoxal 5'-phosphate is required as a cofactor.

The protein resides in the cytoplasm. The catalysed reaction is (6R)-5,10-methylene-5,6,7,8-tetrahydrofolate + glycine + H2O = (6S)-5,6,7,8-tetrahydrofolate + L-serine. Its pathway is one-carbon metabolism; tetrahydrofolate interconversion. It participates in amino-acid biosynthesis; glycine biosynthesis; glycine from L-serine: step 1/1. In terms of biological role, catalyzes the reversible interconversion of serine and glycine with tetrahydrofolate (THF) serving as the one-carbon carrier. This reaction serves as the major source of one-carbon groups required for the biosynthesis of purines, thymidylate, methionine, and other important biomolecules. Also exhibits THF-independent aldolase activity toward beta-hydroxyamino acids, producing glycine and aldehydes, via a retro-aldol mechanism. This is Serine hydroxymethyltransferase from Prochlorococcus marinus (strain NATL1A).